Reading from the N-terminus, the 151-residue chain is D-aminoacyl-tRNA deacylase (151 aa).

Positions 137–138 (GP) match the Gly-cisPro motif, important for rejection of L-amino acids motif.

Belongs to the DTD family. As to quaternary structure, homodimer.

It localises to the cytoplasm. It catalyses the reaction glycyl-tRNA(Ala) + H2O = tRNA(Ala) + glycine + H(+). The enzyme catalyses a D-aminoacyl-tRNA + H2O = a tRNA + a D-alpha-amino acid + H(+). In terms of biological role, an aminoacyl-tRNA editing enzyme that deacylates mischarged D-aminoacyl-tRNAs. Also deacylates mischarged glycyl-tRNA(Ala), protecting cells against glycine mischarging by AlaRS. Acts via tRNA-based rather than protein-based catalysis; rejects L-amino acids rather than detecting D-amino acids in the active site. By recycling D-aminoacyl-tRNA to D-amino acids and free tRNA molecules, this enzyme counteracts the toxicity associated with the formation of D-aminoacyl-tRNA entities in vivo and helps enforce protein L-homochirality. The sequence is that of D-aminoacyl-tRNA deacylase from Protochlamydia amoebophila (strain UWE25).